The sequence spans 397 residues: 1-deoxy-D-xylulose 5-phosphate reductoisomerase (397 aa).

Residues T12, G13, S14, I15, G38, K39, N40, and N126 each contribute to the NADPH site. Residue K127 coordinates 1-deoxy-D-xylulose 5-phosphate. E128 is an NADPH binding site. D152 lines the Mn(2+) pocket. Positions 153, 154, 188, and 211 each coordinate 1-deoxy-D-xylulose 5-phosphate. Residue E154 coordinates Mn(2+). An NADPH-binding site is contributed by G217. Positions 224, 229, 230, and 233 each coordinate 1-deoxy-D-xylulose 5-phosphate. Residue E233 coordinates Mn(2+).

It belongs to the DXR family. It depends on Mg(2+) as a cofactor. The cofactor is Mn(2+).

The catalysed reaction is 2-C-methyl-D-erythritol 4-phosphate + NADP(+) = 1-deoxy-D-xylulose 5-phosphate + NADPH + H(+). It functions in the pathway isoprenoid biosynthesis; isopentenyl diphosphate biosynthesis via DXP pathway; isopentenyl diphosphate from 1-deoxy-D-xylulose 5-phosphate: step 1/6. Catalyzes the NADPH-dependent rearrangement and reduction of 1-deoxy-D-xylulose-5-phosphate (DXP) to 2-C-methyl-D-erythritol 4-phosphate (MEP). The chain is 1-deoxy-D-xylulose 5-phosphate reductoisomerase from Haemophilus influenzae (strain PittEE).